A 61-amino-acid polypeptide reads, in one-letter code: Conotoxin 3 (61 aa).

The N-terminal stretch at 1 to 21 (MRCLPVFVILLLLIASVPSDA) is a signal peptide. Residues 22–48 (VQLKTKDDMPLPSFNGNARRTPRMLSN) constitute a propeptide that is removed on maturation. Residue Trp58 is modified to 6'-bromotryptophan.

Belongs to the conotoxin T superfamily. Post-translationally, contains 2 disulfide bonds that can be either 'C1-C3, C2-C4' or 'C1-C4, C2-C3', since these disulfide connectivities have been observed for conotoxins with cysteine framework V (for examples, see AC P0DQQ7 and AC P81755). Contains 2 disulfide bonds. As to expression, expressed by the venom duct.

The protein localises to the secreted. The protein is Conotoxin 3 of Conus textile (Cloth-of-gold cone).